Reading from the N-terminus, the 334-residue chain is Trans-3-hydroxy-L-proline dehydratase (334 aa).

Residue Cys91 is the Proton acceptor of the active site. Substrate contacts are provided by residues 92–93 (GH), Asp250, and 255–256 (GT).

The protein belongs to the proline racemase family.

It catalyses the reaction trans-3-hydroxy-L-proline = 1-pyrroline-2-carboxylate + H2O. In terms of biological role, catalyzes the dehydration of trans-3-hydroxy-L-proline (t3LHyp) to Delta(1)-pyrroline-2-carboxylate (Pyr2C). Is likely involved in a degradation pathway that converts t3LHyp to L-proline, which allows B.cereus to grow on t3LHyp as a sole carbon source. Displays no proline racemase activity. The polypeptide is Trans-3-hydroxy-L-proline dehydratase (Bacillus cereus (strain ATCC 14579 / DSM 31 / CCUG 7414 / JCM 2152 / NBRC 15305 / NCIMB 9373 / NCTC 2599 / NRRL B-3711)).